Here is a 145-residue protein sequence, read N- to C-terminus: Transcription antitermination protein NusB (145 aa).

This sequence belongs to the NusB family.

Involved in transcription antitermination. Required for transcription of ribosomal RNA (rRNA) genes. Binds specifically to the boxA antiterminator sequence of the ribosomal RNA (rrn) operons. This chain is Transcription antitermination protein NusB, found in Thiobacillus denitrificans (strain ATCC 25259 / T1).